The primary structure comprises 125 residues: Photosystem I reaction center subunit IV, chloroplastic (125 aa).

Residues 1-34 (MASIASSVAVRLGLTQVLPNKNFSSPRSTRLVVR) constitute a chloroplast transit peptide. The segment covering 42–57 (APAAASPEGEAPKAAA) has biased composition (low complexity). Positions 42–68 (APAAASPEGEAPKAAAKPPPIGPKRGS) are disordered.

The protein belongs to the PsaE family.

The protein resides in the plastid. Its subcellular location is the chloroplast thylakoid membrane. Its function is as follows. Stabilizes the interaction between PsaC and the PSI core, assists the docking of the ferredoxin to PSI and interacts with ferredoxin-NADP oxidoreductase. This chain is Photosystem I reaction center subunit IV, chloroplastic (PSAE-1), found in Spinacia oleracea (Spinach).